Reading from the N-terminus, the 204-residue chain is MATQAAGIFSPAITTTTSAVKKLHLFSSSHRPKSLSFTKTAIRAEKTESSSAAPAVKEAPVGFTPPQLDPNTPSPIFAGSTGGLLRKAQVEEFYVITWNSPKEQIFEMPTGGAAIMREGPNLLKLARKEQCLALGTRLRSKYKITYQFYRVFPNGEVQYLHPKDGVYPEKANPGREGVGLNMRSIGKNVSPIEVKFTGKQSYDL.

Residues Met1–Ala44 constitute a chloroplast transit peptide. Position 47 is a phosphothreonine (Thr47). The interval Thr47–Asn71 is disordered. The tract at residues Arg137–Thr145 is ferredoxin and ferredoxin-oxidoreductase binding.

It belongs to the PsaD family. As to quaternary structure, interacts with CURT1C.

The protein resides in the plastid. It is found in the chloroplast thylakoid membrane. Its function is as follows. PSAD can form complexes with ferredoxin and ferredoxin-oxidoreductase in photosystem I (PS I) reaction center. PSAD may encode the ferredoxin-docking protein. In Arabidopsis thaliana (Mouse-ear cress), this protein is Photosystem I reaction center subunit II-2, chloroplastic (PSAD2).